Here is a 417-residue protein sequence, read N- to C-terminus: Aminoacyltransferase FemB (417 aa).

It belongs to the FemABX family.

Its subcellular location is the cytoplasm. The catalysed reaction is MurNAc-L-Ala-D-isoglutaminyl-L-Lys-(N(6)-tri-Gly)-D-Ala-D-Ala-diphospho-di-trans,octa-cis-undecaprenyl-GlcNAc + 2 glycyl-tRNA(Gly) = MurNAc-L-Ala-D-isoglutaminyl-L-Lys-(N(6)-penta-Gly)-D-Ala-D-Ala-diphospho-di-trans,octa-cis-undecaprenyl-GlcNAc + 2 tRNA(Gly) + 2 H(+). Functionally, catalyzes the incorporation of amino acid(s) into the interchain peptide bridge of peptidoglycan, using aminoacyl-tRNA as amino acid donor. The sequence is that of Aminoacyltransferase FemB (femB) from Staphylococcus epidermidis.